A 173-amino-acid polypeptide reads, in one-letter code: Mesencephalic astrocyte-derived neurotrophic factor homolog (173 aa).

Positions 1–22 are cleaved as a signal peptide; that stretch reads MNTSHIVLMICFIVGVGQTALA. 4 disulfide bridges follow: C28/C114, C31/C103, C61/C72, and C148/C151.

Belongs to the ARMET family.

It is found in the secreted. Its function is as follows. Required during the maturation of the embryonic nervous system for maintenance of neuronal and cuticular connectivity. Essential for maintenance of dopaminergic neurons and dopamine levels. In Drosophila virilis (Fruit fly), this protein is Mesencephalic astrocyte-derived neurotrophic factor homolog.